A 254-amino-acid chain; its full sequence is Triosephosphate isomerase (254 aa).

12–14 contacts substrate; it reads NWK. The active-site Electrophile is the His99. Residue Glu169 is the Proton acceptor of the active site. Substrate is bound by residues Gly175, Ser214, and 235–236; that span reads GG.

This sequence belongs to the triosephosphate isomerase family. In terms of assembly, homodimer.

Its subcellular location is the cytoplasm. It carries out the reaction D-glyceraldehyde 3-phosphate = dihydroxyacetone phosphate. The protein operates within carbohydrate biosynthesis; gluconeogenesis. Its pathway is carbohydrate degradation; glycolysis; D-glyceraldehyde 3-phosphate from glycerone phosphate: step 1/1. Involved in the gluconeogenesis. Catalyzes stereospecifically the conversion of dihydroxyacetone phosphate (DHAP) to D-glyceraldehyde-3-phosphate (G3P). This chain is Triosephosphate isomerase, found in Bartonella quintana (strain Toulouse) (Rochalimaea quintana).